Reading from the N-terminus, the 190-residue chain is MELLKQRILKDGRVIGNDILKVDSFLNHQMDVALFNEMGKEFHKQFAHKNITKILTIEASGIGIACIAAQYFNVPVIFAKKTESRNLDSDAYLSEVFSFTKGKTYTIRVSKNYLNSEDTILIIDDFLANGKAALGLAHIVEQSGAKLGGIGIAVEKGFQDGGKLLREKGFDVKSLAIISSMENGRLSFTE.

Xanthine-binding residues include leucine 20 and asparagine 27. 5-phospho-alpha-D-ribose 1-diphosphate is bound at residue 128 to 132; sequence ANGKA. Xanthine is bound at residue lysine 156.

Belongs to the purine/pyrimidine phosphoribosyltransferase family. Xpt subfamily. In terms of assembly, homodimer.

It localises to the cytoplasm. It catalyses the reaction XMP + diphosphate = xanthine + 5-phospho-alpha-D-ribose 1-diphosphate. It functions in the pathway purine metabolism; XMP biosynthesis via salvage pathway; XMP from xanthine: step 1/1. In terms of biological role, converts the preformed base xanthine, a product of nucleic acid breakdown, to xanthosine 5'-monophosphate (XMP), so it can be reused for RNA or DNA synthesis. The sequence is that of Xanthine phosphoribosyltransferase from Ruminiclostridium cellulolyticum (strain ATCC 35319 / DSM 5812 / JCM 6584 / H10) (Clostridium cellulolyticum).